The following is a 36-amino-acid chain: Defensin-like turtle egg white protein TEWP (36 aa).

At Gln-1 the chain carries Pyrrolidone carboxylic acid. 3 disulfides stabilise this stretch: Cys-4-Cys-30, Cys-8-Cys-29, and Cys-12-Cys-24.

The protein belongs to the beta-defensin family. In terms of assembly, monomer. In terms of tissue distribution, detected in egg white (at protein level).

It localises to the secreted. Antibacterial and antiviral peptide. Has strong inhibitory activity towards E.coli and S.typhimurium. Has significant antiviral activity against Chandipura virus. The chain is Defensin-like turtle egg white protein TEWP from Caretta caretta (Loggerhead sea turtle).